Consider the following 299-residue polypeptide: ATP phosphoribosyltransferase (299 aa).

The protein belongs to the ATP phosphoribosyltransferase family. Long subfamily. As to quaternary structure, equilibrium between an active dimeric form, an inactive hexameric form and higher aggregates. Interconversion between the various forms is largely reversible and is influenced by the natural substrates and inhibitors of the enzyme. Mg(2+) is required as a cofactor.

The protein resides in the cytoplasm. It carries out the reaction 1-(5-phospho-beta-D-ribosyl)-ATP + diphosphate = 5-phospho-alpha-D-ribose 1-diphosphate + ATP. It functions in the pathway amino-acid biosynthesis; L-histidine biosynthesis; L-histidine from 5-phospho-alpha-D-ribose 1-diphosphate: step 1/9. With respect to regulation, feedback inhibited by histidine. Functionally, catalyzes the condensation of ATP and 5-phosphoribose 1-diphosphate to form N'-(5'-phosphoribosyl)-ATP (PR-ATP). Has a crucial role in the pathway because the rate of histidine biosynthesis seems to be controlled primarily by regulation of HisG enzymatic activity. This chain is ATP phosphoribosyltransferase, found in Pectobacterium carotovorum subsp. carotovorum (strain PC1).